Here is a 501-residue protein sequence, read N- to C-terminus: Ribose import ATP-binding protein RbsA (501 aa).

ABC transporter domains follow at residues 6-242 and 253-495; these read LQLS…VGRK and VHGQ…VGKK. Residue 38-45 coordinates ATP; the sequence is GENGAGKS.

Belongs to the ABC transporter superfamily. Ribose importer (TC 3.A.1.2.1) family. In terms of assembly, the complex is composed of an ATP-binding protein (RbsA), two transmembrane proteins (RbsC) and a solute-binding protein (RbsB).

The protein localises to the cell inner membrane. It catalyses the reaction D-ribose(out) + ATP + H2O = D-ribose(in) + ADP + phosphate + H(+). Part of the ABC transporter complex RbsABC involved in ribose import. Responsible for energy coupling to the transport system. The polypeptide is Ribose import ATP-binding protein RbsA (Vibrio vulnificus (strain CMCP6)).